Here is a 153-residue protein sequence, read N- to C-terminus: Ribonuclease H (153 aa).

In terms of domain architecture, RNase H type-1 spans 1–141 (MKHVHIFTDG…ADELARKGME (141 aa)). Residues aspartate 9, glutamate 47, aspartate 69, and aspartate 133 each coordinate Mg(2+). A disordered region spans residues 123-153 (HAGHPENERADELARKGMEPFKKARRADAVK). The segment covering 125–153 (GHPENERADELARKGMEPFKKARRADAVK) has biased composition (basic and acidic residues).

Belongs to the RNase H family. In terms of assembly, monomer. The cofactor is Mg(2+).

It is found in the cytoplasm. It catalyses the reaction Endonucleolytic cleavage to 5'-phosphomonoester.. Its function is as follows. Endonuclease that specifically degrades the RNA of RNA-DNA hybrids. This Rhizobium meliloti (strain 1021) (Ensifer meliloti) protein is Ribonuclease H.